The sequence spans 930 residues: Dual serine/threonine and tyrosine protein kinase (930 aa).

The stretch at Arg-383–Lys-428 forms a coiled coil. One can recognise a Protein kinase domain in the interval Pro-653 to Leu-907. ATP contacts are provided by residues Leu-659–Val-667 and Lys-682. Asp-778 serves as the catalytic Proton acceptor.

The protein belongs to the protein kinase superfamily. Ser/Thr protein kinase family. As to expression, widely expressed with the highest expression in brain and ovary.

The protein resides in the cytoplasm. Its subcellular location is the cell membrane. It localises to the apical cell membrane. The protein localises to the basolateral cell membrane. It is found in the cell junction. It catalyses the reaction L-seryl-[protein] + ATP = O-phospho-L-seryl-[protein] + ADP + H(+). It carries out the reaction L-threonyl-[protein] + ATP = O-phospho-L-threonyl-[protein] + ADP + H(+). The catalysed reaction is L-tyrosyl-[protein] + ATP = O-phospho-L-tyrosyl-[protein] + ADP + H(+). Functionally, may act as a positive regulator of ERK phosphorylation downstream of fibroblast growth factor-receptor activation. May induce both caspase-dependent apoptosis and caspase-independent cell death. The sequence is that of Dual serine/threonine and tyrosine protein kinase (DSTYK) from Gallus gallus (Chicken).